The primary structure comprises 206 residues: Large ribosomal subunit protein uL4 (206 aa).

Residues Met-63–His-96 are disordered. Over residues Tyr-64–Ala-77 the composition is skewed to basic residues.

Belongs to the universal ribosomal protein uL4 family. Part of the 50S ribosomal subunit.

In terms of biological role, one of the primary rRNA binding proteins, this protein initially binds near the 5'-end of the 23S rRNA. It is important during the early stages of 50S assembly. It makes multiple contacts with different domains of the 23S rRNA in the assembled 50S subunit and ribosome. Forms part of the polypeptide exit tunnel. The protein is Large ribosomal subunit protein uL4 of Allorhizobium ampelinum (strain ATCC BAA-846 / DSM 112012 / S4) (Agrobacterium vitis (strain S4)).